A 468-amino-acid polypeptide reads, in one-letter code: Trigger factor (468 aa).

Residues 162 to 243 (GDVLTLDLQA…VSQVAARELP (82 aa)) enclose the PPIase FKBP-type domain. Positions 428-468 (NGEIVDLDDEEDEETEAAEADATEAADAEKADDKAEEKTEG) are disordered. A compositionally biased stretch (acidic residues) spans 432 to 453 (VDLDDEEDEETEAAEADATEAA). Residues 454 to 468 (DAEKADDKAEEKTEG) show a composition bias toward basic and acidic residues.

Belongs to the FKBP-type PPIase family. Tig subfamily.

It is found in the cytoplasm. The enzyme catalyses [protein]-peptidylproline (omega=180) = [protein]-peptidylproline (omega=0). Functionally, involved in protein export. Acts as a chaperone by maintaining the newly synthesized protein in an open conformation. Functions as a peptidyl-prolyl cis-trans isomerase. The sequence is that of Trigger factor from Streptomyces coelicolor (strain ATCC BAA-471 / A3(2) / M145).